A 78-amino-acid chain; its full sequence is Antimicrobial peptide marcin-18 (78 aa).

The first 23 residues, 1–23 (MQFKKQLMVIFLAYFLVVNESEA), serve as a signal peptide directing secretion. Position 41 is an arginine amide (R41). Residues 42-78 (RKNQRSRSIMKRDLENLFDPYQRNLELDRLLKQLPNY) constitute a propeptide that is removed on maturation.

This sequence belongs to the non-disulfide-bridged peptide (NDBP) superfamily. Medium-length antimicrobial peptide (group 3) family. Expressed by the venom gland.

It is found in the secreted. Its subcellular location is the target cell membrane. Antimicrobial peptide with potent activity against bacteria. Acts by fastly disrupting the bacterial membrane. Shows activity against Gram-positive bacteria S.aureus (MIC=1.5-2.9 uM) and S.epidermidis (MIC=2.9 uM), M.luteus (MIC=23.4 uM), B.thuringiensis (MIC=2.9 uM), B.subtilis (MIC=2.9 uM) and Gram-negative bacteria E.coli (MIC=5.9-11.7 uM) and P.aeruginosa (MIC=5.9 uM), as well as against penicillin (MIC=2.9 uM) and methicillin (MIC=1.5-2.9 uM) resistant bacteria. Antibiotic activity is not affected by major negatively charged components of the prokaryotic cell wall (e.g. lipopolysaccharides and lipoteichoic acid). In vivo, in a mouse model of lethal peritonitis, shows potent antibiotic activity without cytotoxicity, improving the survival rate. This Olivierus martensii (Manchurian scorpion) protein is Antimicrobial peptide marcin-18.